Here is a 286-residue protein sequence, read N- to C-terminus: Deleted in azoospermia-like-A (286 aa).

One can recognise an RRM domain in the interval 33–114 (NTVFVGGIDI…PAIRKICTYV (82 aa)). A DAZ domain is found at 155-180 (ACPYPSSPPMAIQQIPVGCQQPGYFQ).

Belongs to the RRM DAZ family. In terms of assembly, interacts with the C-terminus of pabp1 and with epabp. Prior to oocyte maturation, found in a complex with epabp and pum2 proteins and spdy1 mRNA; pum2 dissociates from the complex during maturation. In terms of tissue distribution, germ-line specific. Oocyte mRNA expression is first restricted to the granulo-fibrillar material (GFM) of the mitochondrial cloud and then to the oocyte germ plasm at the vegetal cortex. Remains an mRNA component of the germ plasm until the neurula stage. In 2-8 cell embryos, expressed in the germ plasm matrix between germinal granules and mitochondria. Expressed in primordial germ cells (PGCs) later in embryogenesis. In addition to the ovaries of adult females, expressed in the testis of adult and juvenile males in spermatogonia and spermatocytes. The protein is restricted to the embryonic germ plasm and primordial germ cells.

The protein localises to the cytoplasm. In terms of biological role, RNA-binding protein that is required for primordial germ cell (PGC) differentiation and indirectly necessary for the migration of PGCs through the endoderm. May promote meiotic cell division during spermatogenesis. Shows a preference for G- and U-rich RNAs and probably binds the 3'-UTR of target mRNAs. Stimulates the initiation of translation of mRNAs through the recruitment of poly(A)-binding proteins (PABPs). The chain is Deleted in azoospermia-like-A (dazl-a) from Xenopus laevis (African clawed frog).